A 611-amino-acid polypeptide reads, in one-letter code: Chaperone protein DnaK (611 aa).

T173 carries the phosphothreonine; by autocatalysis modification. The span at 579–592 shows a compositional bias: low complexity; that stretch reads AAGQAEGAQGAQDA. A disordered region spans residues 579–598; sequence AAGQAEGAQGAQDAGAKKDN.

The protein belongs to the heat shock protein 70 family.

Its function is as follows. Acts as a chaperone. The sequence is that of Chaperone protein DnaK from Bacillus cereus (strain B4264).